The sequence spans 261 residues: tRNA U34 carboxymethyltransferase (261 aa).

Carboxy-S-adenosyl-L-methionine-binding positions include K25, W39, K44, G63, 114–115 (VE), Y135, and R250.

Belongs to the class I-like SAM-binding methyltransferase superfamily. CmoB family. Homotetramer.

The catalysed reaction is carboxy-S-adenosyl-L-methionine + 5-hydroxyuridine(34) in tRNA = 5-carboxymethoxyuridine(34) in tRNA + S-adenosyl-L-homocysteine + H(+). Catalyzes carboxymethyl transfer from carboxy-S-adenosyl-L-methionine (Cx-SAM) to 5-hydroxyuridine (ho5U) to form 5-carboxymethoxyuridine (cmo5U) at position 34 in tRNAs. This is tRNA U34 carboxymethyltransferase from Helicobacter pylori (strain HPAG1).